The following is a 66-amino-acid chain: Large ribosomal subunit protein bL33c (66 aa).

Component of the chloroplast large ribosomal subunit (LSU). Mature 70S chloroplast ribosomes of higher plants consist of a small (30S) and a large (50S) subunit. The 30S small subunit contains 1 molecule of ribosomal RNA (16S rRNA) and 24 different proteins. The 50S large subunit contains 3 rRNA molecules (23S, 5S and 4.5S rRNA) and 33 different proteins.

The protein resides in the plastid. It localises to the chloroplast. In terms of biological role, component of the chloroplast ribosome (chloro-ribosome), a dedicated translation machinery responsible for the synthesis of chloroplast genome-encoded proteins, including proteins of the transcription and translation machinery and components of the photosynthetic apparatus. This chain is Large ribosomal subunit protein bL33c (rpl33), found in Spinacia oleracea (Spinach).